Reading from the N-terminus, the 250-residue chain is Uridylate kinase (250 aa).

17 to 20 is a binding site for ATP; that stretch reads KLSG. Gly-59 lines the UMP pocket. ATP is bound by residues Gly-60 and Arg-64. UMP is bound by residues Asp-79 and 140-147; that span reads TGNPYFTT. Residues Thr-167, Tyr-173, and Asp-176 each contribute to the ATP site.

This sequence belongs to the UMP kinase family. In terms of assembly, homohexamer.

It localises to the cytoplasm. It carries out the reaction UMP + ATP = UDP + ADP. It functions in the pathway pyrimidine metabolism; CTP biosynthesis via de novo pathway; UDP from UMP (UMPK route): step 1/1. Its activity is regulated as follows. Inhibited by UTP. Functionally, catalyzes the reversible phosphorylation of UMP to UDP. This is Uridylate kinase from Myxococcus xanthus (strain DK1622).